Here is a 342-residue protein sequence, read N- to C-terminus: Farnesyl pyrophosphate synthase 2 (342 aa).

K47, R50, and Q86 together coordinate isopentenyl diphosphate. Residues D93 and D97 each coordinate Mg(2+). Dimethylallyl diphosphate is bound at residue R102. R103 contributes to the isopentenyl diphosphate binding site. 5 residues coordinate dimethylallyl diphosphate: K190, T191, Q229, K246, and K255.

It belongs to the FPP/GGPP synthase family. It depends on Mg(2+) as a cofactor.

Its subcellular location is the cytoplasm. The catalysed reaction is isopentenyl diphosphate + dimethylallyl diphosphate = (2E)-geranyl diphosphate + diphosphate. It catalyses the reaction isopentenyl diphosphate + (2E)-geranyl diphosphate = (2E,6E)-farnesyl diphosphate + diphosphate. It participates in isoprenoid biosynthesis; farnesyl diphosphate biosynthesis; farnesyl diphosphate from geranyl diphosphate and isopentenyl diphosphate: step 1/1. The protein operates within isoprenoid biosynthesis; geranyl diphosphate biosynthesis; geranyl diphosphate from dimethylallyl diphosphate and isopentenyl diphosphate: step 1/1. Functionally, catalyzes the sequential condensation of isopentenyl pyrophosphate with the allylic pyrophosphates, dimethylallyl pyrophosphate, and then with the resultant geranylpyrophosphate to the ultimate product farnesyl pyrophosphate. This is Farnesyl pyrophosphate synthase 2 (FPS2) from Lupinus albus (White lupine).